The sequence spans 188 residues: Elongation factor P (188 aa).

This sequence belongs to the elongation factor P family.

The protein resides in the cytoplasm. The protein operates within protein biosynthesis; polypeptide chain elongation. Its function is as follows. Involved in peptide bond synthesis. Stimulates efficient translation and peptide-bond synthesis on native or reconstituted 70S ribosomes in vitro. Probably functions indirectly by altering the affinity of the ribosome for aminoacyl-tRNA, thus increasing their reactivity as acceptors for peptidyl transferase. The chain is Elongation factor P from Cellvibrio japonicus (strain Ueda107) (Pseudomonas fluorescens subsp. cellulosa).